The following is a 678-amino-acid chain: MAPSLSPGPAALRRAPQLLLLLLAAECALAALLPAREATQFLRPRQRRAFQVFEEAKQGHLERECVEELCSREEAREVFENDPETDYFYPRYLDCINKYGSPYTKNSGFATCVQNLPDQCTPNPCDRKGTQACQDLMGNFFCLCKAGWGGRLCDKDVNECSQENGGCLQICHNKPGSFHCSCHSGFELSSDGRTCQDIDECADSEACGEARCKNLPGSYSCLCDEGFAYSSQEKACRDVDECLQGRCEQVCVNSPGSYTCHCDGRGGLKLSQDMDTCEDILPCVPFSVAKSVKSLYLGRMFSGTPVIRLRFKRLQPTRLVAEFDFRTFDPEGILLFAGGHQDSTWIVLALRAGRLELQLRYNGVGRVTSSGPVINHGMWQTISVEELARNLVIKVNRDAVMKIAVAGDLFQPERGLYHLNLTVGGIPFHEKDLVQPINPRLDGCMRSWNWLNGEDTTIQETVKVNTRMQCFSVTERGSFYPGSGFAFYSLDYMRTPLDVGTESTWEVEVVAHIRPAADTGVLFALWAPDLRAVPLSVALVDYHSTKKLKKQLVVLAVEHTALALMEIKVCDGQEHVVTVSLRDGEATLEVDGTRGQSEVSAAQLQERLAVLERHLRSPVLTFAGGLPDVPVTSAPVTAFYRGCMTLEVNRRLLDLDEAAYKHSDITAHSCPPVEPAAA.

The signal sequence occupies residues 1 to 30; sequence MAPSLSPGPAALRRAPQLLLLLLAAECALA. The Gla domain occupies 53-94; that stretch reads FEEAKQGHLERECVEELCSREEAREVFENDPETDYFYPRYLD. Residues Cys65 and Cys70 are joined by a disulfide bond. A Phosphoserine; by FAM20C modification is found at Ser71. The region spanning 116–154 is the EGF-like 1; calcium-binding domain; it reads LPDQCTPNPCDRKGTQACQDLMGNFFCLCKAGWGGRLCD. 14 disulfide bridges follow: Cys120–Cys133, Cys125–Cys142, Cys144–Cys153, Cys160–Cys171, Cys167–Cys180, Cys182–Cys195, Cys201–Cys212, Cys207–Cys221, Cys223–Cys236, Cys242–Cys251, Cys247–Cys260, Cys262–Cys277, Cys283–Cys570, and Cys444–Cys470. In terms of domain architecture, EGF-like 2; calcium-binding spans 156–196; that stretch reads DVNECSQENGGCLQICHNKPGSFHCSCHSGFELSSDGRTCQ. The 41-residue stretch at 197–237 folds into the EGF-like 3; calcium-binding domain; sequence DIDECADSEACGEARCKNLPGSYSCLCDEGFAYSSQEKACR. In terms of domain architecture, EGF-like 4; calcium-binding spans 238 to 278; the sequence is DVDECLQGRCEQVCVNSPGSYTCHCDGRGGLKLSQDMDTCE. Laminin G-like domains follow at residues 298–470 and 477–670; these read GRMF…RMQC and GSFY…AHSC. Asp329 and Glu331 together coordinate Ca(2+). Asn420 is a glycosylation site (N-linked (GlcNAc...) asparagine). Arg440 provides a ligand contact to Ca(2+). Phosphothreonine is present on residues Thr621 and Thr637. The residue at position 640 (Tyr640) is a Phosphotyrosine. Cys643 and Cys670 are oxidised to a cystine. Asp656 contributes to the Ca(2+) binding site.

In terms of assembly, heterodimer and heterotetramer with AXL. In terms of processing, proteolytically processed after secretion to yield a N-terminal 36 kDa protein and a C-terminal 50 kDa protein including the laminin G-like domains which activates AXL. Post-translationally, gamma-carboxyglutamate residues are formed by vitamin K dependent carboxylation. These residues are essential for the binding of calcium. In terms of tissue distribution, plasma. Isoform 1 and isoform 2 are widely expressed, isoform 1 being expressed at higher levels than isoform 2 in most tissues. Isoform 2 is the predominant form in spleen.

Its subcellular location is the secreted. Ligand for tyrosine-protein kinase receptors AXL, TYRO3 and MER whose signaling is implicated in cell growth and survival, cell adhesion and cell migration. GAS6/AXL signaling plays a role in various processes such as endothelial cell survival during acidification by preventing apoptosis, optimal cytokine signaling during human natural killer cell development, hepatic regeneration, gonadotropin-releasing hormone neuron survival and migration, platelet activation, or regulation of thrombotic responses. In terms of biological role, (Microbial infection) Can bridge virus envelope phosphatidylserine to the TAM receptor tyrosine kinase Axl to mediate viral entry by apoptotic mimicry. Plays a role in Dengue cell entry by apoptotic mimicry. Plays a role in Vaccinia virus cell entry by apoptotic mimicry. Plays a role in ebolavirus and marburgvirus cell entry by apoptotic mimicry. The sequence is that of Growth arrest-specific protein 6 from Homo sapiens (Human).